The chain runs to 294 residues: 4-hydroxy-tetrahydrodipicolinate synthase (294 aa).

Thr-45 is a binding site for pyruvate. Tyr-133 serves as the catalytic Proton donor/acceptor. Residue Lys-161 is the Schiff-base intermediate with substrate of the active site. Residue Ile-203 coordinates pyruvate.

The protein belongs to the DapA family. In terms of assembly, homotetramer; dimer of dimers.

The protein localises to the cytoplasm. It carries out the reaction L-aspartate 4-semialdehyde + pyruvate = (2S,4S)-4-hydroxy-2,3,4,5-tetrahydrodipicolinate + H2O + H(+). It functions in the pathway amino-acid biosynthesis; L-lysine biosynthesis via DAP pathway; (S)-tetrahydrodipicolinate from L-aspartate: step 3/4. In terms of biological role, catalyzes the condensation of (S)-aspartate-beta-semialdehyde [(S)-ASA] and pyruvate to 4-hydroxy-tetrahydrodipicolinate (HTPA). The polypeptide is 4-hydroxy-tetrahydrodipicolinate synthase (Buchnera aphidicola subsp. Acyrthosiphon pisum (strain 5A)).